An 89-amino-acid chain; its full sequence is DNA-directed RNA polymerase subunit Rpo6 (89 aa).

Belongs to the archaeal Rpo6/eukaryotic RPB6 RNA polymerase subunit family. As to quaternary structure, part of the RNA polymerase complex.

It is found in the cytoplasm. It carries out the reaction RNA(n) + a ribonucleoside 5'-triphosphate = RNA(n+1) + diphosphate. Functionally, DNA-dependent RNA polymerase (RNAP) catalyzes the transcription of DNA into RNA using the four ribonucleoside triphosphates as substrates. This chain is DNA-directed RNA polymerase subunit Rpo6, found in Aeropyrum pernix (strain ATCC 700893 / DSM 11879 / JCM 9820 / NBRC 100138 / K1).